The sequence spans 291 residues: MKISITAPAKINLSLDALYKREDGYHEVEMVMTTIDLADRLFLERLDEDKIVLDVKAHFIPEDRRNLIYQAALLLKNRFNIKMGVRITIDKHIPVSAGLAGGSSDAAAALKGLNIIWELGLSIEELAEISSEIGSDIAFCVYGGTALATGRGEKISALPNMPGCWIVLAKPSISVSTPTIYKELQVDNVEHPNTEKMIESIKNGDLDGIFASTGNVLESVTLEKNPQVKRIKDRMLAFGAEAALMSGSGPTVFALIKQYSRAKRVYNGLRGFCEEVYMVRPWSESENDTIN.

The active site involves Lys-10. Pro-94–Ser-104 serves as a coordination point for ATP. The active site involves Asp-136.

The protein belongs to the GHMP kinase family. IspE subfamily.

The catalysed reaction is 4-CDP-2-C-methyl-D-erythritol + ATP = 4-CDP-2-C-methyl-D-erythritol 2-phosphate + ADP + H(+). The protein operates within isoprenoid biosynthesis; isopentenyl diphosphate biosynthesis via DXP pathway; isopentenyl diphosphate from 1-deoxy-D-xylulose 5-phosphate: step 3/6. Functionally, catalyzes the phosphorylation of the position 2 hydroxy group of 4-diphosphocytidyl-2C-methyl-D-erythritol. The polypeptide is 4-diphosphocytidyl-2-C-methyl-D-erythritol kinase (Listeria innocua serovar 6a (strain ATCC BAA-680 / CLIP 11262)).